The sequence spans 345 residues: Phosphoribosylformylglycinamidine cyclo-ligase (345 aa).

Belongs to the AIR synthase family.

It localises to the cytoplasm. The catalysed reaction is 2-formamido-N(1)-(5-O-phospho-beta-D-ribosyl)acetamidine + ATP = 5-amino-1-(5-phospho-beta-D-ribosyl)imidazole + ADP + phosphate + H(+). Its pathway is purine metabolism; IMP biosynthesis via de novo pathway; 5-amino-1-(5-phospho-D-ribosyl)imidazole from N(2)-formyl-N(1)-(5-phospho-D-ribosyl)glycinamide: step 2/2. In Limosilactobacillus reuteri (strain DSM 20016) (Lactobacillus reuteri), this protein is Phosphoribosylformylglycinamidine cyclo-ligase.